The following is a 170-amino-acid chain: MIDGDGFRPNVGIVICNSHGQVFWAKRYGQHSWQFPQGGIDDGETPEQAMYRELYEEVGLTKNDVRILASSRHWLRYKLPKRLVRWDSKPVCIGQKQKWFLLRLECDESKVNMQRDRSPEFDGWRWVSYWYPVRQVVSFKRDVYRRALKEFAVIAMPFKERKFKRKGKKG.

The Nudix hydrolase domain occupies 6–149; sequence GFRPNVGIVI…KRDVYRRALK (144 aa). The Nudix box motif lies at 38–59; sequence GGIDDGETPEQAMYRELYEEVG.

This sequence belongs to the Nudix hydrolase family. RppH subfamily. A divalent metal cation is required as a cofactor.

Accelerates the degradation of transcripts by removing pyrophosphate from the 5'-end of triphosphorylated RNA, leading to a more labile monophosphorylated state that can stimulate subsequent ribonuclease cleavage. This Aliivibrio fischeri (strain ATCC 700601 / ES114) (Vibrio fischeri) protein is RNA pyrophosphohydrolase.